The sequence spans 88 residues: Small ribosomal subunit protein uS19 (88 aa).

It belongs to the universal ribosomal protein uS19 family.

Functionally, protein S19 forms a complex with S13 that binds strongly to the 16S ribosomal RNA. The chain is Small ribosomal subunit protein uS19 from Chlamydia felis (strain Fe/C-56) (Chlamydophila felis).